Consider the following 318-residue polypeptide: NADH-ubiquinone oxidoreductase chain 1 (318 aa).

The next 8 membrane-spanning stretches (helical) occupy residues 1–21, 71–91, 101–121, 145–165, 172–192, 224–244, 253–273, and 294–314; these read MLPI…VAFL, LLIL…TPIP, LGLL…LWAG, VTLG…TMQL, HIWL…STLA, FFLA…IMFI, ELFL…FLWI, and LPLT…ISGI.

The protein belongs to the complex I subunit 1 family.

It is found in the mitochondrion inner membrane. It carries out the reaction a ubiquinone + NADH + 5 H(+)(in) = a ubiquinol + NAD(+) + 4 H(+)(out). Functionally, core subunit of the mitochondrial membrane respiratory chain NADH dehydrogenase (Complex I) that is believed to belong to the minimal assembly required for catalysis. Complex I functions in the transfer of electrons from NADH to the respiratory chain. The immediate electron acceptor for the enzyme is believed to be ubiquinone. This chain is NADH-ubiquinone oxidoreductase chain 1 (MT-ND1), found in Varanus rudicollis (Rough-necked monitor lizard).